Reading from the N-terminus, the 312-residue chain is DNA-directed RNA polymerase subunit alpha (312 aa).

The tract at residues 1–226 is alpha N-terminal domain (alpha-NTD); sequence MIEFEKPIIT…EHLNLFTDLT (226 aa). Residues 243–312 form an alpha C-terminal domain (alpha-CTD) region; sequence DEKVLDRTIE…DLGLGLKNDK (70 aa).

The protein belongs to the RNA polymerase alpha chain family. In terms of assembly, homodimer. The RNAP catalytic core consists of 2 alpha, 1 beta, 1 beta' and 1 omega subunit. When a sigma factor is associated with the core the holoenzyme is formed, which can initiate transcription.

It carries out the reaction RNA(n) + a ribonucleoside 5'-triphosphate = RNA(n+1) + diphosphate. Functionally, DNA-dependent RNA polymerase catalyzes the transcription of DNA into RNA using the four ribonucleoside triphosphates as substrates. This Streptococcus pyogenes serotype M3 (strain ATCC BAA-595 / MGAS315) protein is DNA-directed RNA polymerase subunit alpha.